Here is a 1318-residue protein sequence, read N- to C-terminus: Maestro heat-like repeat family member 5 (1318 aa).

The segment at 1 to 38 (MDRQCSERPYSCTPTGRVSSAVSQNSRISPPVSTSMKD) is disordered. Positions 12–38 (CTPTGRVSSAVSQNSRISPPVSTSMKD) are enriched in polar residues. The HEAT 1 repeat unit spans residues 581–618 (DELHFLLSHLYIWLASEKAHERQRAVHSCMILLKFLNH). Residues 676–695 (ESQAPKELSQAHSDGAPLWN) form a disordered region. HEAT repeat units follow at residues 769 to 811 (GAKL…SHTC), 840 to 880 (PTSH…LLAA), 996 to 1033 (RQIPAVLRQLLPSLQSPQERERKVAILILTKFLYSPVL), 1037 to 1074 (LPKQAALTVLAQGLHDPSPEVRVLSLQGLSNILFHPDK), 1076 to 1113 (SLLQGQLRPLLDGFFQSSDQVIVCIMGTVSDTLHRLGA), 1118 to 1155 (SQSLGVAISTRSFFNDERDGIRAAAMALFGDLVAAMAD), 1164 to 1200 (QVHQSMVPLLLHLKDQCPAVATQAKFTFYRCAVLLRW), and 1278 to 1315 (VDTNLLFRTFEHLRSDPEPSIREFATSQLSFLQKVSAR).

The sequence is that of Maestro heat-like repeat family member 5 (MROH5) from Homo sapiens (Human).